A 71-amino-acid polypeptide reads, in one-letter code: Gas vesicle protein A (71 aa).

Residues 12 to 22 (LAEVIDRILDK) are alpha helix 1. Residues 26 to 34 (VDAWVRVSL) are beta-strand 1. A beta turn region spans residues 35–37 (VGI). The interval 38 to 46 (ELLAIEARI) is beta-strand 2. Positions 51–70 (VETYLKYAEAVGLTQSAAVP) are alpha helix 2.

Belongs to the gas vesicle GvpA family. The gas vesicle shell is 2 nm thick and consists of a single layer of this protein. It forms helical ribs nearly perpendicular to the long axis of the vesicle.

It localises to the gas vesicle shell. Its function is as follows. Gas vesicles are hollow, gas filled proteinaceous nanostructures found in some microorganisms. During planktonic growth they allow positioning of the organism at a favorable depth for light or nutrient acquisition. GvpA forms the protein shell. This is Gas vesicle protein A from Microchaete diplosiphon (Fremyella diplosiphon).